The following is a 317-amino-acid chain: Tenomodulin (317 aa).

The Cytoplasmic portion of the chain corresponds to 1–30 (MAKNPPENCEGCHILNAEALKSKKIRKSLK). Residues 31–50 (ICGLVFGILALTLIVLFWGS) traverse the membrane as a helical; Signal-anchor for type II membrane protein segment. Topologically, residues 51–317 (KHFWPEVSKK…WWVARMLGRV (267 aa)) are extracellular. Residues 93–186 (GNGTDETLEV…ICDNVTMYWI (94 aa)) enclose the BRICHOS domain. The N-linked (GlcNAc...) asparagine glycan is linked to Asn-94. A disulfide bond links Cys-120 and Cys-178. N-linked (GlcNAc...) asparagine glycosylation occurs at Asn-180. Position 239 is a phosphoserine (Ser-239).

The protein belongs to the chondromodulin-1 family. As to expression, highly expressed in tendons.

The protein resides in the membrane. It is found in the nucleus envelope. May be an angiogenesis inhibitor. The polypeptide is Tenomodulin (Tnmd) (Rattus norvegicus (Rat)).